Here is a 212-residue protein sequence, read N- to C-terminus: Probable nicotinate-nucleotide adenylyltransferase (212 aa).

Belongs to the NadD family.

It catalyses the reaction nicotinate beta-D-ribonucleotide + ATP + H(+) = deamido-NAD(+) + diphosphate. It participates in cofactor biosynthesis; NAD(+) biosynthesis; deamido-NAD(+) from nicotinate D-ribonucleotide: step 1/1. Catalyzes the reversible adenylation of nicotinate mononucleotide (NaMN) to nicotinic acid adenine dinucleotide (NaAD). This is Probable nicotinate-nucleotide adenylyltransferase from Shewanella sp. (strain MR-4).